A 357-amino-acid chain; its full sequence is Ribosomal RNA large subunit methyltransferase M (357 aa).

S-adenosyl-L-methionine contacts are provided by residues Ser-183, 216–219 (APGG), Asp-235, Asp-255, and Asp-271. Lys-300 acts as the Proton acceptor in catalysis.

It belongs to the class I-like SAM-binding methyltransferase superfamily. RNA methyltransferase RlmE family. RlmM subfamily. In terms of assembly, monomer.

The protein resides in the cytoplasm. It carries out the reaction cytidine(2498) in 23S rRNA + S-adenosyl-L-methionine = 2'-O-methylcytidine(2498) in 23S rRNA + S-adenosyl-L-homocysteine + H(+). Catalyzes the 2'-O-methylation at nucleotide C2498 in 23S rRNA. The chain is Ribosomal RNA large subunit methyltransferase M from Pseudomonas syringae pv. tomato (strain ATCC BAA-871 / DC3000).